The chain runs to 463 residues: L-seryl-tRNA(Sec) selenium transferase (463 aa).

Residue Lys-295 is modified to N6-(pyridoxal phosphate)lysine.

This sequence belongs to the SelA family. In terms of assembly, homodecamer; pentamer of dimers. Binds only one seryl-tRNA(Sec) per dimer. Requires pyridoxal 5'-phosphate as cofactor.

It localises to the cytoplasm. The enzyme catalyses L-seryl-tRNA(Sec) + selenophosphate + H(+) = L-selenocysteinyl-tRNA(Sec) + phosphate. It functions in the pathway aminoacyl-tRNA biosynthesis; selenocysteinyl-tRNA(Sec) biosynthesis; selenocysteinyl-tRNA(Sec) from L-seryl-tRNA(Sec) (bacterial route): step 1/1. Converts seryl-tRNA(Sec) to selenocysteinyl-tRNA(Sec) required for selenoprotein biosynthesis. This is L-seryl-tRNA(Sec) selenium transferase from Escherichia coli O81 (strain ED1a).